Consider the following 702-residue polypeptide: Ribosomal RNA large subunit methyltransferase K/L (702 aa).

Residues 43–154 (LVYQSLMWSR…KETASIALDL (112 aa)) enclose the THUMP domain.

The protein belongs to the methyltransferase superfamily. RlmKL family.

Its subcellular location is the cytoplasm. The catalysed reaction is guanosine(2445) in 23S rRNA + S-adenosyl-L-methionine = N(2)-methylguanosine(2445) in 23S rRNA + S-adenosyl-L-homocysteine + H(+). It catalyses the reaction guanosine(2069) in 23S rRNA + S-adenosyl-L-methionine = N(2)-methylguanosine(2069) in 23S rRNA + S-adenosyl-L-homocysteine + H(+). In terms of biological role, specifically methylates the guanine in position 2445 (m2G2445) and the guanine in position 2069 (m7G2069) of 23S rRNA. The chain is Ribosomal RNA large subunit methyltransferase K/L from Shigella flexneri serotype 5b (strain 8401).